The following is an 83-amino-acid chain: U5-theraphotoxin-Hs1a 6 (83 aa).

An N-terminal signal peptide occupies residues 1–21 (MKTSMFLTLTGLVLLFVVCYA). Positions 22–49 (SESEEKEFPKELLSSIFAADSDFKVEER) are excised as a propeptide. Disulfide bonds link C51-C63, C56-C68, and C62-C75.

Belongs to the neurotoxin 10 (Hwtx-1) family. 51 (Hntx-8) subfamily. Hntx-8 sub-subfamily. As to expression, expressed by the venom gland.

The protein resides in the secreted. Functionally, agglutinates erythrocytes. The sequence is that of U5-theraphotoxin-Hs1a 6 from Cyriopagopus schmidti (Chinese bird spider).